Consider the following 402-residue polypeptide: Endoplasmic reticulum junction formation protein lunapark-B (402 aa).

Topologically, residues 1–45 (MGAIISRWKTKPSTVELLESLDKDIKDLEEFRAKNQRLLKLWVGR) are cytoplasmic. The helical transmembrane segment at 46–66 (LLFYSSALYLLTCLCVYYLYF) threads the bilayer. The Lumenal segment spans residues 67–77 (PQQWGARLITA). The helical transmembrane segment at 78–98 (LPLLAFPALVLLLRKMLIFLF) threads the bilayer. At 99–402 (SKRTERNNDK…EEQKKEDESN (304 aa)) the chain is on the cytoplasmic side. Positions 100–128 (KRTERNNDKLEDLKTQKRKILEEVMETET) form a coiled coil. Residues 142–240 (ESKKKAEAEA…PGPGSGMRPP (99 aa)) are disordered. The span at 205-222 (SASTPAGASQAETPQQMM) shows a compositional bias: polar residues. The C4-type; plays a role in ER morphology zinc-finger motif lies at 276-301 (CQQCFSHNGMALKEEFEFVAFRCAYC). The tract at residues 311-402 (RPQAPRLPEF…EEQKKEDESN (92 aa)) is disordered. Positions 321–330 (SFERRLRSES) are enriched in basic and acidic residues. The segment covering 341 to 352 (TPEDSDAPEDDM) has biased composition (acidic residues). Residues 385-402 (PHAEAEALEEQKKEDESN) show a composition bias toward basic and acidic residues.

This sequence belongs to the lunapark family. As to quaternary structure, homodimer; homodimerization requires the C4-type zinc finger motif and decreases during mitosis in a phosphorylation-dependent manner. Post-translationally, phosphorylated. Phosphorylation occurs during interphase. Phosphorylation also occurs during mitosis; these phosphorylations reduce both its homodimerization and the ER three-way tubular junction formation.

The protein resides in the endoplasmic reticulum membrane. Functionally, endoplasmic reticulum (ER)-shaping membrane protein that plays a role in determining ER morphology. Involved in the stabilization of nascent three-way ER tubular junctions within the ER network. May also play a role as a curvature-stabilizing protein within three-way ER tubular junction network. The chain is Endoplasmic reticulum junction formation protein lunapark-B (lnpkb) from Danio rerio (Zebrafish).